A 224-amino-acid chain; its full sequence is Aminopyrimidine aminohydrolase (224 aa).

Position 44 (aspartate 44) interacts with substrate. Cysteine 135 serves as the catalytic Nucleophile. 2 residues coordinate substrate: tyrosine 139 and tyrosine 165. Catalysis depends on glutamate 207, which acts as the Proton donor.

The protein belongs to the TenA family. As to quaternary structure, homotetramer.

It carries out the reaction 4-amino-5-aminomethyl-2-methylpyrimidine + H2O = 4-amino-5-hydroxymethyl-2-methylpyrimidine + NH4(+). The catalysed reaction is thiamine + H2O = 5-(2-hydroxyethyl)-4-methylthiazole + 4-amino-5-hydroxymethyl-2-methylpyrimidine + H(+). Its pathway is cofactor biosynthesis; thiamine diphosphate biosynthesis. Catalyzes an amino-pyrimidine hydrolysis reaction at the C5' of the pyrimidine moiety of thiamine compounds, a reaction that is part of a thiamine salvage pathway. Thus, catalyzes the conversion of 4-amino-5-aminomethyl-2-methylpyrimidine to 4-amino-5-hydroxymethyl-2-methylpyrimidine (HMP). To a lesser extent, is also able to catalyze the hydrolytic cleavage of thiamine; however, this thiaminase activity is unlikely to be physiologically relevant. Therefore, is involved in the regeneration of the thiamine pyrimidine from thiamine degraded products present in the environment, rather than in thiamine degradation. This chain is Aminopyrimidine aminohydrolase, found in Halalkalibacterium halodurans (strain ATCC BAA-125 / DSM 18197 / FERM 7344 / JCM 9153 / C-125) (Bacillus halodurans).